The chain runs to 147 residues: SsrA-binding protein (147 aa).

This sequence belongs to the SmpB family.

It is found in the cytoplasm. Its function is as follows. Required for rescue of stalled ribosomes mediated by trans-translation. Binds to transfer-messenger RNA (tmRNA), required for stable association of tmRNA with ribosomes. tmRNA and SmpB together mimic tRNA shape, replacing the anticodon stem-loop with SmpB. tmRNA is encoded by the ssrA gene; the 2 termini fold to resemble tRNA(Ala) and it encodes a 'tag peptide', a short internal open reading frame. During trans-translation Ala-aminoacylated tmRNA acts like a tRNA, entering the A-site of stalled ribosomes, displacing the stalled mRNA. The ribosome then switches to translate the ORF on the tmRNA; the nascent peptide is terminated with the 'tag peptide' encoded by the tmRNA and targeted for degradation. The ribosome is freed to recommence translation, which seems to be the essential function of trans-translation. The protein is SsrA-binding protein of Mycoplasmopsis fermentans (strain ATCC 19989 / NBRC 14854 / NCTC 10117 / PG18) (Mycoplasma fermentans).